Here is a 332-residue protein sequence, read N- to C-terminus: N-arachidonyl glycine receptor (332 aa).

Residues 1-26 are Extracellular-facing; the sequence is MTTPHSQAQPGLPIDPHPDEYKVAAL. The chain crosses the membrane as a helical span at residues 27–47; the sequence is VFYSCIFIIGLFVNVTALWVF. Residues 48–56 lie on the Cytoplasmic side of the membrane; the sequence is SCTTKKRTT. A helical transmembrane segment spans residues 57–77; the sequence is VTVYMMNVALLDLVFIMSLPF. Residues 78-95 are Extracellular-facing; sequence RMLYYAKGEWPFGEYFCR. Cysteine 94 and cysteine 173 are joined by a disulfide. Residues 96 to 116 form a helical membrane-spanning segment; it reads ILGALTVFYPSIALWLLAFIS. At 117–138 the chain is on the cytoplasmic side; that stretch reads ADRYMAIVQPKYAKELKNTCKA. A helical transmembrane segment spans residues 139 to 159; it reads VMACVGVWIMTLTTTIPLLLL. The Extracellular segment spans residues 160-192; it reads YEDPDTASSTPPTCLKISDIIYLKAINALNFTR. Residue asparagine 189 is glycosylated (N-linked (GlcNAc...) asparagine). A helical membrane pass occupies residues 193–213; it reads LIFFFLIPLFIMIGCYLVIIH. Over 214–233 the chain is Cytoplasmic; it reads SLLHGKTSKLKPKVKEKSIR. The chain crosses the membrane as a helical span at residues 234-254; it reads IIITLMVQVLVCFMPFHICFA. Over 255–269 the chain is Extracellular; that stretch reads FLMLGGDENSYNPWG. Residues 270–290 traverse the membrane as a helical segment; it reads AFTTFLMNLSTCLDVILYYIV. The Cytoplasmic segment spans residues 291 to 332; it reads SKQFQARVISVMLYRNYLRSVRRKSFRSGSLRSLSNINSEML. Serine 323 carries the post-translational modification Phosphoserine.

Belongs to the G-protein coupled receptor 1 family.

The protein resides in the cell membrane. It localises to the cytoplasmic vesicle membrane. Its function is as follows. G protein-coupled receptor (GPCR) that plays a role in diverse physiological processes particularly within the immune and nervous systems. Becomes active when triggered by various endogenous ligands including endocannabinoid N-arachidonyl glycine (NAGly), delta-9-tetrahydrocannabinol or resolvin D2/RvD2 derived from the omega-3 fatty acid docosahexaenoic acid (DHA). Upon RvD2 binding, facilitates the resolution of inflammation, aiding in tissue repair and homeostasis. Mechanistically, RvD2 ligation initiates Galphas protein coupling, activation of cAMP-PKA signaling pathway and phosphorylation of STAT3, leading to RvD2-stimulated macrophage phagocytosis. Mediates NAGly-induced process of reorganization of actin filaments and induction of acrosomal exocytosis. Activation by N-arachidonoyl glycine (NAGly) can also induce apoptosis in macrophages. Plays a role in homeostasis of CD8+ subsets of intraepithelial lymphocytes (IELs) (CD8alphaalpha and CD8alphabeta IELs) in small intestine by supporting preferential migration of CD8alphaalpha T-cells to intraepithelial compartment over lamina propria compartment, and by mediating their reconstitution into small intestine after bone marrow transplant. Participates also in hypotensive responses, mediating reduction in intraocular and blood pressure. The chain is N-arachidonyl glycine receptor (GPR18) from Bos taurus (Bovine).